Here is a 408-residue protein sequence, read N- to C-terminus: Phosphoglycerate kinase (408 aa).

Substrate-binding positions include 22 to 24, Arg39, 60 to 63, Arg117, and Arg157; these read DIN and HQSR. ATP-binding positions include Glu332 and 358–361; that span reads GGHT.

Belongs to the phosphoglycerate kinase family. As to quaternary structure, monomer.

Its subcellular location is the cytoplasm. The enzyme catalyses (2R)-3-phosphoglycerate + ATP = (2R)-3-phospho-glyceroyl phosphate + ADP. Its pathway is carbohydrate degradation; glycolysis; pyruvate from D-glyceraldehyde 3-phosphate: step 2/5. This is Phosphoglycerate kinase from Thermoplasma volcanium (strain ATCC 51530 / DSM 4299 / JCM 9571 / NBRC 15438 / GSS1).